Consider the following 140-residue polypeptide: Small ribosomal subunit protein uS19 (140 aa).

It belongs to the universal ribosomal protein uS19 family.

Its function is as follows. Protein S19 forms a complex with S13 that binds strongly to the 16S ribosomal RNA. The protein is Small ribosomal subunit protein uS19 of Natronomonas pharaonis (strain ATCC 35678 / DSM 2160 / CIP 103997 / JCM 8858 / NBRC 14720 / NCIMB 2260 / Gabara) (Halobacterium pharaonis).